A 217-amino-acid chain; its full sequence is Eukaryotic translation initiation factor 4E (217 aa).

A disordered region spans residues 1 to 30; that stretch reads MATVEPETTPTPNPPTTEEEKTESNQEVAN. Ala2 is subject to N-acetylalanine. Position 22 is a phosphothreonine (Thr22). An EIF4EBP1/2/3 binding region spans residues 37–40; it reads HPLQ. 56–57 lines the mRNA pocket; it reads WQ. An EIF4EBP1/2/3 binding region spans residues 73 to 77; that stretch reads WALYN. Residue 102 to 103 coordinates mRNA; it reads WE. The EIF4EBP1/2/3 binding stretch occupies residues 132 to 139; the sequence is ETLLCLIG. Residues 157–162 and 205–207 each bind mRNA; these read RAKGDK and TKS. Ser209 carries the post-translational modification Phosphoserine; by PKC and MKNK2.

This sequence belongs to the eukaryotic initiation factor 4E family. EIF4F is a multi-subunit complex, the composition of which varies with external and internal environmental conditions. It is composed of at least EIF4A, EIF4E and EIF4G1/EIF4G3. EIF4E is also known to interact with other partners. Interacts with EIF4ENIF1/4E-T; promotes recruitment to P-bodies and import into the nucleus. Hypophosphorylated EIF4EBP1, EIF4EBP2 and EIF4EBP3 compete with EIF4G1/EIF4G3 to interact with EIF4E; insulin stimulated MAP-kinase (MAPK1 and MAPK3) phosphorylation of EIF4EBP1 causes dissociation of the complex allowing EIF4G1/EIF4G3 to bind and consequent initiation of translation. Interacts mutually exclusive with EIF4A1 or EIF4A2. Interacts with NGDN and PIWIL2. Component of the CYFIP1-EIF4E-FMR1 complex composed of CYFIP, EIF4E and FMR1. Interacts directly with CYFIP1. Interacts with CLOCK. Binds to MKNK2 in nucleus. Interacts with LIMD1, WTIP and AJUBA. Interacts with APOBEC3G in an RNA-dependent manner. Interacts with LARP1. Interacts with METTL3. Interacts with RBM24; this interaction prevents EIF4E from binding to p53/TP53 mRNA and inhibits the assembly of translation initiation complex. Interacts with DDX3X; interaction is direct and in an RNA-independent manner; this interaction enhances EIF4E cap-binding ability and is required for the repression of cap-dependent translation and the increase of IRES-mediated translation. DDX3X competes with EIF4G1 for interaction with EIF4E. Interacts with EIF4G1; which in a mutual exclusive interaction associates either with EIF1 or with EIF4E on a common binding site. Interacts with BTG4 and CNOT7. Interacts with LRPPRC (via N-terminus); the interaction promotes association of EIF4E with 4ESE-containing mRNAs. Interacts with mRNA cleavage enzyme CPSF3 and its cofactor CPSF1. Interacts (via RING-type zinc finger) with PML; the interaction results in conformational changes of both interacting proteins and reduces EIF4E affinity for the 5' m7G cap of mRNA, thus reducing EIF4E-mediated mRNA nuclear export. Interacts with homeobox protein HHEX/PRH; the interaction inhibits EIF4E-mediated mRNA nuclear export. Interacts with homeobox protein HOXA9; the interaction positively regulates EIF4E-mediated mRNA nuclear export. Interacts with homeobox protein EMX2. In terms of assembly, (Microbial infection) Interacts with Lassa virus Z protein. As to quaternary structure, (Microbial infection) Interacts with Lymphocytic choriomeningitis virus (LCMV) Z protein (via RING-type zinc finger); the interaction results in conformational changes of both interacting proteins and reduces EIF4E affinity for the m7G mRNA cap structure. (Microbial infection) Interacts (via cap-binding region) with potato virus Y VPg; this interaction mediates the translation of the VPg-viral RNA conjugates and interferes with the cellular EIF4E-dependent mRNA export and translation. Phosphorylation increases the ability of the protein to bind to mRNA caps and to form the eIF4F complex. Phosphorylation also enhances its mRNA transport function. Phosphorylation at Ser-209 is not essential for protein synthesis.

The protein resides in the cytoplasm. It is found in the P-body. Its subcellular location is the stress granule. It localises to the nucleus. The protein localises to the nucleus speckle. The protein resides in the nuclear body. Functionally, acts in the cytoplasm to initiate and regulate protein synthesis and is required in the nucleus for export of a subset of mRNAs from the nucleus to the cytoplasm which promotes processes such as RNA capping, processing and splicing. Component of the protein complex eIF4F, which is involved in the recognition of the mRNA cap, ATP-dependent unwinding of 5'-terminal secondary structure and recruitment of mRNA to the ribosome. This protein recognizes and binds the 7-methylguanosine (m7G)-containing mRNA cap during an early step in the initiation of protein synthesis and facilitates ribosome binding by inducing the unwinding of the mRNAs secondary structures. Together with EIF4G1, antagonizes the scanning promoted by EIF1-EIF4G1 and is required for TISU translation, a process where the TISU element recognition makes scanning unnecessary. In addition to its role in translation initiation, also acts as a regulator of translation and stability in the cytoplasm. Component of the CYFIP1-EIF4E-FMR1 complex which binds to the mRNA cap and mediates translational repression: in the complex, EIF4E mediates the binding to the mRNA cap. Component of a multiprotein complex that sequesters and represses translation of proneurogenic factors during neurogenesis. In P-bodies, component of a complex that mediates the storage of translationally inactive mRNAs in the cytoplasm and prevents their degradation. May play an important role in spermatogenesis through translational regulation of stage-specific mRNAs during germ cell development. As well as its roles in translation, also involved in mRNA nucleocytoplasmic transport. Its role in mRNA export from the nucleus to the cytoplasm relies on its ability to bind the m7G cap of RNAs and on the presence of the 50-nucleotide EIF4E sensitivity element (4ESE) in the 3'UTR of sensitive transcripts. Interaction with the 4ESE is mediated by LRPPRC which binds simultaneously to both EIF4E and the 4ESE, thereby acting as a platform for assembly for the RNA export complex. EIF4E-dependent mRNA export is independent of ongoing protein or RNA synthesis and is also NFX1-independent but is XPO1-dependent with LRPPRC interacting with XPO1 to form an EIF4E-dependent mRNA export complex. Alters the composition of the cytoplasmic face of the nuclear pore to promote RNA export by reducing RANBP2 expression, relocalizing nucleoporin NUP214 and increasing expression of RANBP1 and RNA export factors DDX19 and GLE1. Promotes the nuclear export of cyclin CCND1 mRNA. Promotes the nuclear export of NOS2/iNOS mRNA. Promotes the nuclear export of MDM2 mRNA. Promotes the export of additional mRNAs, including others involved in the cell cycle. In the nucleus, binds to capped splice factor-encoding mRNAs and stimulates their nuclear export to enhance splice factor production by increasing their cytoplasmic availability to the translation machinery. May also regulate splicing through interaction with the spliceosome in an RNA and m7G cap-dependent manner. Also binds to some pre-mRNAs and may play a role in their recruitment to the spliceosome. Promotes steady-state capping of a subset of coding and non-coding RNAs by mediating nuclear export of capping machinery mRNAs including RNMT, RNGTT and RAMAC to enhance their translation. Stimulates mRNA 3'-end processing by promoting the expression of several core cleavage complex factors required for mRNA cleavage and polyadenylation, and may also have a direct effect through its interaction with the CPSF3 cleavage enzyme. Rescues cells from apoptosis by promoting activation of serine/threonine-protein kinase AKT1 through mRNA export of NBS1 which potentiates AKT1 phosphorylation and also through mRNA export of AKT1 effectors, allowing for increased production of these proteins. The polypeptide is Eukaryotic translation initiation factor 4E (Homo sapiens (Human)).